We begin with the raw amino-acid sequence, 422 residues long: Serine--tRNA ligase (422 aa).

229–231 (TAE) contacts L-serine. ATP contacts are provided by residues 260 to 262 (RRE) and V276. E283 contributes to the L-serine binding site. An ATP-binding site is contributed by 349-352 (EVTS). T384 lines the L-serine pocket.

This sequence belongs to the class-II aminoacyl-tRNA synthetase family. Type-1 seryl-tRNA synthetase subfamily. Homodimer. The tRNA molecule binds across the dimer.

Its subcellular location is the cytoplasm. It carries out the reaction tRNA(Ser) + L-serine + ATP = L-seryl-tRNA(Ser) + AMP + diphosphate + H(+). The catalysed reaction is tRNA(Sec) + L-serine + ATP = L-seryl-tRNA(Sec) + AMP + diphosphate + H(+). It functions in the pathway aminoacyl-tRNA biosynthesis; selenocysteinyl-tRNA(Sec) biosynthesis; L-seryl-tRNA(Sec) from L-serine and tRNA(Sec): step 1/1. Functionally, catalyzes the attachment of serine to tRNA(Ser). Is also able to aminoacylate tRNA(Sec) with serine, to form the misacylated tRNA L-seryl-tRNA(Sec), which will be further converted into selenocysteinyl-tRNA(Sec). In Treponema denticola (strain ATCC 35405 / DSM 14222 / CIP 103919 / JCM 8153 / KCTC 15104), this protein is Serine--tRNA ligase.